The chain runs to 382 residues: MDESIKKLPDLAIADLIFTVKLEGKTGTESYNKLIKEIETHKMLPLYKILVEQLKWTEDQGLVSKLKAENESELKALDNKITDSVENFGESEIREAYLAKSDFYCRIGDKDTAVEMYRQTFEKTVPLGQKLDIVFTLIRMGIFWMDHDIVTRNLEKAQSLVEEGGDWDRKNRLKTYEAVYKMSIRQFKEASDLYLETVASFTSTEFIDYSRFIQYLIFTSLLHLDRVSLKQKVIDSPDVLSVINDTPKLQDLLQSFYNGDYANFFGALAHFSDSIKGDRYLAEHSRFFTREMRILAYNQFLESYSSVKLESMSNQFGVSYDFIDRELSRFVAAGRLNCKIDKVSGVIETTRSDAKNHLYKTTLQQGDNLLNRVQKLSRVINV.

The region spanning 186 to 354 (QFKEASDLYL…GVIETTRSDA (169 aa)) is the PCI domain.

Belongs to the proteasome subunit S10 family.

In terms of biological role, acts as a regulatory subunit of the 26S proteasome which is involved in the ATP-dependent degradation of ubiquitinated proteins. This chain is 26S proteasome non-ATPase regulatory subunit 6 (psmD6), found in Dictyostelium discoideum (Social amoeba).